The primary structure comprises 158 residues: C-type lectin lectoxin-Enh7 (158 aa).

Positions 1–23 are cleaved as a signal peptide; that stretch reads MGQFTVVSLGLLAVFLSLSGAKG. Disulfide bonds link Cys26–Cys37, Cys54–Cys154, and Cys129–Cys146. A C-type lectin domain is found at 33-155; sequence RNGVCNKLFP…CASLHPFICQ (123 aa). A Mannose-binding motif is present at residues 119–121; it reads EPN. Residues Glu127, Asn142, and Asp143 each coordinate Ca(2+).

This sequence belongs to the true venom lectin family. As to expression, expressed by the venom gland.

It is found in the secreted. Its function is as follows. Mannose-binding lectin which recognizes specific carbohydrate structures and agglutinates a variety of animal cells by binding to cell-surface glycoproteins and glycolipids. May be a calcium-dependent lectin. In Pseudoferania polylepis (Macleay's water snake), this protein is C-type lectin lectoxin-Enh7.